A 154-amino-acid polypeptide reads, in one-letter code: Myoglobin (154 aa).

A Globin domain is found at 2–148 (GLSDAEWQLV…FRNDIAAQYK (147 aa)). Serine 4 carries the post-translational modification Phosphoserine. A nitrite-binding site is contributed by histidine 65. Position 65 (histidine 65) interacts with O2. At threonine 68 the chain carries Phosphothreonine. Residue histidine 94 coordinates heme b.

It belongs to the globin family. Monomeric.

It localises to the cytoplasm. It is found in the sarcoplasm. It catalyses the reaction Fe(III)-heme b-[protein] + nitric oxide + H2O = Fe(II)-heme b-[protein] + nitrite + 2 H(+). The enzyme catalyses H2O2 + AH2 = A + 2 H2O. Its function is as follows. Monomeric heme protein which primary function is to store oxygen and facilitate its diffusion within muscle tissues. Reversibly binds oxygen through a pentacoordinated heme iron and enables its timely and efficient release as needed during periods of heightened demand. Depending on the oxidative conditions of tissues and cells, and in addition to its ability to bind oxygen, it also has a nitrite reductase activity whereby it regulates the production of bioactive nitric oxide. Under stress conditions, like hypoxia and anoxia, it also protects cells against reactive oxygen species thanks to its pseudoperoxidase activity. This Oryctolagus cuniculus (Rabbit) protein is Myoglobin (MB).